Here is a 123-residue protein sequence, read N- to C-terminus: Small ribosomal subunit protein bS16 (123 aa).

Residues 79 to 123 form a disordered region; sequence AGIAKRPSRNNPTKGEPGKKAQERLALAKQAEEEAAAKAAEAASE.

This sequence belongs to the bacterial ribosomal protein bS16 family.

This Brucella melitensis biotype 2 (strain ATCC 23457) protein is Small ribosomal subunit protein bS16.